The following is a 386-amino-acid chain: Probable zinc transporter zrg17 (386 aa).

6 helical membrane-spanning segments follow: residues isoleucine 102–threonine 122, isoleucine 128–valine 148, methionine 163–leucine 183, valine 208–leucine 228, phenylalanine 243–tyrosine 263, and phenylalanine 268–isoleucine 288.

This sequence belongs to the cation diffusion facilitator (CDF) transporter (TC 2.A.4) family. SLC30A subfamily. In terms of assembly, interacts with cis4.

The protein localises to the cytoplasm. It is found in the nucleus membrane. Its function is as follows. Probable transporter involved in the regulation of zinc homeostasis. This Schizosaccharomyces pombe (strain 972 / ATCC 24843) (Fission yeast) protein is Probable zinc transporter zrg17 (zrg17).